A 342-amino-acid polypeptide reads, in one-letter code: MKEIVRALEGYGPPKDKAAEQCGWQAGGALCPGGLCCSQYGWCANTPEYCGSGCQSQCDGGVGGEGGCVDLGCANTPEYCGSGCQSQCDGGVGGEGGCVDLGSIISRSTFEEMLKHRNNAACPAKGFYTYDAFISAAKAFPAFGTTGDVDTCKREIAAFFGQTSHATTGGWPTAPDGPYAWGYCHKEELNQASSYCSPSPAYPCAPGKKYYGRGPIQLSWNYGQCGQALGLDLLNNPDLVATDRVISFKAAIWFWMTPQFPKPSCHDVITGQWSPTGHDISAGRAPGYGVITNIINGGLECGRGWDARVEDRIGFYKRYCDMFGVGYGSNLDCYNQTPFGLG.

The N-terminal stretch at 1-19 (MKEIVRALEGYGPPKDKAA) is a signal peptide. Residues 20-60 (EQCGWQAGGALCPGGLCCSQYGWCANTPEYCGSGCQSQCDG) form the Chitin-binding type-1 domain. Cystine bridges form between cysteine 22–cysteine 37, cysteine 31–cysteine 43, cysteine 36–cysteine 80, cysteine 84–cysteine 88, cysteine 122–cysteine 184, cysteine 196–cysteine 204, and cysteine 301–cysteine 333.

The protein belongs to the glycosyl hydrolase 19 family. Chitinase class I subfamily.

Its function is as follows. Inactive chitinase-like protein that does not exhibit hydrolytic activity toward chitin. Binds strongly to chitin and possesses antifungal activity toward the fungal pathogen Altenaria alternata in plate assays. Probably involved in defense against fungal pathogens through a mechanism that only involves carbohydrate binding. The protein is Inactive chitinase-like protein 2 of Hevea brasiliensis (Para rubber tree).